Here is an 89-residue protein sequence, read N- to C-terminus: Acylphosphatase (89 aa).

The Acylphosphatase-like domain maps to 3-89; that stretch reads HIHLQVFGRV…NQKLSDFRSI (87 aa). Residues Arg-18 and Asn-36 contribute to the active site.

This sequence belongs to the acylphosphatase family.

The enzyme catalyses an acyl phosphate + H2O = a carboxylate + phosphate + H(+). The sequence is that of Acylphosphatase (acyP) from Staphylococcus aureus (strain Mu3 / ATCC 700698).